The chain runs to 397 residues: Phosphonopyruvate decarboxylase (397 aa).

The protein belongs to the TPP enzyme family. Thiamine diphosphate serves as cofactor. It depends on Mg(2+) as a cofactor.

It carries out the reaction 3-phosphonopyruvate + H(+) = phosphonoacetaldehyde + CO2. Its pathway is secondary metabolite biosynthesis; bialaphos biosynthesis. In terms of biological role, involved in the biosynthesis of phosphinothricin tripeptide (PTT), also known as bialaphos (BA), a natural-product antibiotic and potent herbicide. Catalyzes the decarboxylation of phosphonopyruvate (PnPy) to generate phosphonoacetaldehyde (PnAA). This is Phosphonopyruvate decarboxylase from Streptomyces viridochromogenes (strain DSM 40736 / JCM 4977 / BCRC 1201 / Tue 494).